Reading from the N-terminus, the 337-residue chain is Ketol-acid reductoisomerase (NADP(+)) (337 aa).

Residues 3–183 (VEMFYDDDAD…GGTRAGVIKT (181 aa)) enclose the KARI N-terminal Rossmann domain. Residues 26-29 (YGSQ), K49, S52, S54, and 84-87 (DTAQ) each bind NADP(+). H109 is an active-site residue. G135 contributes to the NADP(+) binding site. Positions 184-329 (TFKEETETDL…KKLRDLMSWV (146 aa)) constitute a KARI C-terminal knotted domain. Residues D192, E196, E228, and E232 each contribute to the Mg(2+) site. S253 is a substrate binding site.

Belongs to the ketol-acid reductoisomerase family. Mg(2+) is required as a cofactor.

The enzyme catalyses (2R)-2,3-dihydroxy-3-methylbutanoate + NADP(+) = (2S)-2-acetolactate + NADPH + H(+). It carries out the reaction (2R,3R)-2,3-dihydroxy-3-methylpentanoate + NADP(+) = (S)-2-ethyl-2-hydroxy-3-oxobutanoate + NADPH + H(+). It participates in amino-acid biosynthesis; L-isoleucine biosynthesis; L-isoleucine from 2-oxobutanoate: step 2/4. Its pathway is amino-acid biosynthesis; L-valine biosynthesis; L-valine from pyruvate: step 2/4. In terms of biological role, involved in the biosynthesis of branched-chain amino acids (BCAA). Catalyzes an alkyl-migration followed by a ketol-acid reduction of (S)-2-acetolactate (S2AL) to yield (R)-2,3-dihydroxy-isovalerate. In the isomerase reaction, S2AL is rearranged via a Mg-dependent methyl migration to produce 3-hydroxy-3-methyl-2-ketobutyrate (HMKB). In the reductase reaction, this 2-ketoacid undergoes a metal-dependent reduction by NADPH to yield (R)-2,3-dihydroxy-isovalerate. This Rhodococcus jostii (strain RHA1) protein is Ketol-acid reductoisomerase (NADP(+)).